A 618-amino-acid chain; its full sequence is uncharacterized protein (618 aa).

A DNA-binding region (zn(2)-C6 fungal-type) is located at residues 18 to 47 (SCQRCRQRKIKCDRLHPCFQCVKSNSQCFY). A Phosphoserine modification is found at Ser598.

The protein resides in the nucleus. This is an uncharacterized protein from Schizosaccharomyces pombe (strain 972 / ATCC 24843) (Fission yeast).